The chain runs to 208 residues: Imidazoleglycerol-phosphate dehydratase (208 aa).

Belongs to the imidazoleglycerol-phosphate dehydratase family.

It is found in the cytoplasm. It catalyses the reaction D-erythro-1-(imidazol-4-yl)glycerol 3-phosphate = 3-(imidazol-4-yl)-2-oxopropyl phosphate + H2O. It functions in the pathway amino-acid biosynthesis; L-histidine biosynthesis; L-histidine from 5-phospho-alpha-D-ribose 1-diphosphate: step 6/9. This chain is Imidazoleglycerol-phosphate dehydratase, found in Arthrobacter sp. (strain FB24).